We begin with the raw amino-acid sequence, 237 residues long: Sugar fermentation stimulation protein homolog (237 aa).

It belongs to the SfsA family.

This Pseudomonas putida (strain W619) protein is Sugar fermentation stimulation protein homolog.